Here is a 1956-residue protein sequence, read N- to C-terminus: Sodium channel protein type 10 subunit alpha (1956 aa).

Residues 1–125 are Cytoplasmic-facing; the sequence is MEFPIGSLET…FNLIRRTAIK (125 aa). The disordered stretch occupies residues 27 to 54; it reads QIAAKQGTKKAREKHREQKDQEEKPRPQ. Over residues 40–54 the composition is skewed to basic and acidic residues; that stretch reads KHREQKDQEEKPRPQ. The stretch at 116-405 is one I repeat; that stretch reads FNLIRRTAIK…VTMAYEEQNQ (290 aa). The chain crosses the membrane as a helical span at residues 126–149; it reads VSVHSWFSLFITVTILVNCVCMTR. Residues 150-154 lie on the Extracellular side of the membrane; that stretch reads TDLPE. The chain crosses the membrane as a helical span at residues 155-174; it reads KIEYVFTVIYTFEALIKILA. The Cytoplasmic segment spans residues 175 to 187; it reads RGFCLNEFTYLRD. Residues 188–206 form a helical membrane-spanning segment; the sequence is PWNWLDFSVITLAYVGTAI. At 207–212 the chain is on the extracellular side; sequence DLRGIS. Residues 213–232 traverse the membrane as a helical; Voltage-sensor segment; the sequence is GLRTFRVLRALKTVSVIPGL. Over 233 to 248 the chain is Cytoplasmic; the sequence is KVIVGALIHSVKKLAD. The chain crosses the membrane as a helical span at residues 249-272; the sequence is VTILTIFCLSVFALVGLQLFKGNL. Topologically, residues 273–341 are extracellular; the sequence is KNKCVKNDMA…PDFNYTSFDS (69 aa). Cys-276 and Cys-319 are joined by a disulfide. N-linked (GlcNAc...) asparagine glycans are attached at residues Asn-284, Asn-288, Asn-312, and Asn-335. The segment at residues 342–366 is an intramembrane region (pore-forming); sequence FAWAFLSLFRLMTQDSWERLYQQTL. Over 367 to 373 the chain is Extracellular; the sequence is RTSGKIY. Residues 374 to 399 traverse the membrane as a helical segment; it reads MIFFVLVIFLGSFYLVNLILAVVTMA. Topologically, residues 400–659 are cytoplasmic; it reads YEEQNQATTD…MWVKLKTILF (260 aa). Phosphoserine is present on residues Ser-441, Ser-444, Ser-467, and Ser-479. Positions 443–454 are enriched in polar residues; sequence HSHNGSPLTSKN. 2 disordered regions span residues 443–485 and 500–580; these read HSHN…YNQR and SHGS…LAPG. The span at 561 to 570 shows a compositional bias: basic and acidic residues; the sequence is DSRHGEDEHQ. Phosphoserine is present on residues Ser-612 and Ser-615. The stretch at 647-911 is one II repeat; the sequence is CCPMWVKLKT…EDDGEVNNLQ (265 aa). The helical transmembrane segment at 660–684 threads the bilayer; that stretch reads GLVTDPFAELTITLCIVVNTIFMAM. Residues 685–695 lie on the Extracellular side of the membrane; the sequence is EHHGMSPTFEA. The helical transmembrane segment at 696-719 threads the bilayer; the sequence is MLQIGNIVFTIFFTAEMVFKIIAF. At 720-727 the chain is on the cytoplasmic side; sequence DPYYYFQK. A helical membrane pass occupies residues 728 to 747; sequence KWNIFDCIIVTVSLLELGVA. Residues 748–753 lie on the Extracellular side of the membrane; sequence KKGSLS. A helical; Voltage-sensor transmembrane segment spans residues 754-773; sequence VLRSFRLLRVFKLAKSWPTL. Residues 774–789 are Cytoplasmic-facing; that stretch reads NTLIKIIGNSVGALGN. A helical transmembrane segment spans residues 790 to 810; the sequence is LTIILAIIVFVFALVGKQLLG. The Extracellular segment spans residues 811–834; the sequence is ENYRNNRKNISAPHEDWPRWHMHD. Residue Asn-819 is glycosylated (N-linked (GlcNAc...) asparagine). The pore-forming intramembrane region spans 835–855; that stretch reads FFHSFLIVFRILCGEWIENMW. Residues 856–864 are Extracellular-facing; that stretch reads ACMEVGQKS. A disulfide bridge links Cys-857 with Cys-866. A helical transmembrane segment spans residues 865 to 890; that stretch reads ICLILFLTVMVLGNLVVLNLFIALLL. The Cytoplasmic segment spans residues 891–1147; that stretch reads NSFSADNLTA…GWQVRKTCYR (257 aa). Disordered stretches follow at residues 963 to 986 and 1041 to 1089; these read AANT…EHSD and DHLT…GSTV. One copy of the III repeat lies at 1140 to 1449; that stretch reads QVRKTCYRIV…KKYYNAMKKL (310 aa). A helical transmembrane segment spans residues 1148-1171; the sequence is IVEHSWFESFIIFMILLSSGSLAF. Residues 1172 to 1184 are Extracellular-facing; that stretch reads EDYYLDQKPTVKA. A helical membrane pass occupies residues 1185 to 1210; that stretch reads LLEYTDRVFTFIFVFEMLLKWVAYGF. The Cytoplasmic segment spans residues 1211–1216; it reads KKYFTN. A helical transmembrane segment spans residues 1217 to 1238; it reads AWCWLDFLIVNISLISLTAKIL. Topologically, residues 1239-1242 are extracellular; the sequence is EYSE. The chain crosses the membrane as a helical; Voltage-sensor span at residues 1243-1264; that stretch reads VAPIKALRTLRALRPLRALSRF. Topologically, residues 1265 to 1283 are cytoplasmic; it reads EGMRVVVDALVGAIPSIMN. Residues 1284–1311 traverse the membrane as a helical segment; the sequence is VLLVCLIFWLIFSIMGVNLFAGKFWRCI. Residues Asn-1312, Asn-1328, and Asn-1336 are each glycosylated (N-linked (GlcNAc...) asparagine). Residues 1312–1353 lie on the Extracellular side of the membrane; sequence NYTDGEFSLVPLSIVNNKSDCKIQNSTGSFFWVNVKVNFDNV. Positions 1354–1375 form an intramembrane region, pore-forming; sequence AMGYLALLQVATFKGWMDIMYA. The Extracellular segment spans residues 1376 to 1391; the sequence is AVDSREVNMQPKWEDN. A helical transmembrane segment spans residues 1392-1418; sequence VYMYLYFVIFIIFGGFFTLNLFVGVII. Topologically, residues 1419–1471 are cytoplasmic; sequence DNFNQQKKKLGGQDIFMTEEQKKYYNAMKKLGSKKPQKPIPRPLNKFQGFVFD. Ser-1451 carries the post-translational modification Phosphoserine; by PKC. Residues 1458-1757 form an IV repeat; sequence IPRPLNKFQG…WEKFDPEATQ (300 aa). A helical membrane pass occupies residues 1472–1495; that stretch reads IVTRQAFDITIMVLICLNMITMMV. Residues 1496–1506 lie on the Extracellular side of the membrane; the sequence is ETDDQSEEKTK. Residues 1507–1530 form a helical membrane-spanning segment; sequence ILGKINQFFVAVFTGECVMKMFAL. Residues 1531–1536 are Cytoplasmic-facing; the sequence is RQYYFT. The chain crosses the membrane as a helical span at residues 1537 to 1560; it reads NGWNVFDFIVVVLSIASLIFSAIL. The Extracellular segment spans residues 1561 to 1572; sequence KSLQSYFSPTLF. Residues 1573–1594 traverse the membrane as a helical; Voltage-sensor segment; the sequence is RVIRLARIGRILRLIRAAKGIR. Topologically, residues 1595–1609 are cytoplasmic; sequence TLLFALMMSLPALFN. A helical membrane pass occupies residues 1610–1632; the sequence is IGLLLFLVMFIYSIFGMSSFPHV. The Extracellular portion of the chain corresponds to 1633-1646; the sequence is RWEAGIDDMFNFQT. The pore-forming intramembrane region spans 1647-1669; it reads FANSMLCLFQITTSAGWDGLLSP. The Extracellular portion of the chain corresponds to 1670–1697; it reads ILNTGPPYCDPNLPNSNGTRGDCGSPAV. Residue Asn-1686 is glycosylated (N-linked (GlcNAc...) asparagine). The helical transmembrane segment at 1698–1722 threads the bilayer; sequence GIIFFTTYIIISFLIMVNMYIAVIL. At 1723-1956 the chain is on the cytoplasmic side; the sequence is ENFNVATEES…TSMELIAPGP (234 aa). Positions 1851-1880 constitute an IQ domain; that stretch reads EDISATVIQKAYRSYVLHRSMALSNTPCVP. Residues 1909–1956 form a disordered region; the sequence is SETASATSFPPSYESVTRGLSDRVNMRTSSSIQNEDEATSMELIAPGP.

It belongs to the sodium channel (TC 1.A.1.10) family. Nav1.8/SCN10A subfamily. As to quaternary structure, the channel consists of an ion conducting pore forming alpha-subunit regulated by one or more associated auxiliary subunits SCN1B, SCN2B and SCN3B; electrophysiological properties may vary depending on the type of the associated beta subunits. Found in a number of complexes with PRX, DYNLT1 and PDZD2. Interacts with proteins such as FSTL1, PRX, DYNLT1, PDZD2, S100A10 and many others. Interacts with NEDD4 and NEDD4L. Ubiquitinated by NEDD4L; which promotes its endocytosis. In terms of processing, phosphorylation at Ser-1451 by PKC in a highly conserved cytoplasmic loop slows inactivation of the sodium channel and reduces peak sodium currents. Post-translationally, lacks the cysteine which covalently binds the conotoxin GVIIJ. This cysteine (position 816) is speculated in other sodium channel subunits alpha to be implied in covalent binding with the sodium channel subunit beta-2 or beta-4. In terms of tissue distribution, expressed in the dorsal root ganglia and sciatic nerve.

It localises to the cell membrane. It catalyses the reaction Na(+)(in) = Na(+)(out). Its function is as follows. Tetrodotoxin-resistant channel that mediates the voltage-dependent sodium ion permeability of excitable membranes. Assuming opened or closed conformations in response to the voltage difference across the membrane, the protein forms a sodium-selective channel through which sodium ions may pass in accordance with their electrochemical gradient. Plays a role in neuropathic pain mechanisms. This is Sodium channel protein type 10 subunit alpha from Homo sapiens (Human).